We begin with the raw amino-acid sequence, 128 residues long: DNA-directed RNA polymerase subunit omega (128 aa).

The tract at residues 87–106 (ARSSQAAPKSAPGQEIGKSF) is disordered.

Belongs to the RNA polymerase subunit omega family. As to quaternary structure, the RNAP catalytic core consists of 2 alpha, 1 beta, 1 beta' and 1 omega subunit. When a sigma factor is associated with the core the holoenzyme is formed, which can initiate transcription.

It catalyses the reaction RNA(n) + a ribonucleoside 5'-triphosphate = RNA(n+1) + diphosphate. Promotes RNA polymerase assembly. Latches the N- and C-terminal regions of the beta' subunit thereby facilitating its interaction with the beta and alpha subunits. The protein is DNA-directed RNA polymerase subunit omega of Anaplasma marginale (strain St. Maries).